We begin with the raw amino-acid sequence, 93 residues long: Ubiquinol-cytochrome-c reductase complex assembly factor 3 (93 aa).

Residues 1–7 are Mitochondrial matrix-facing; it reads MDSLRKM. Residues 8-28 form a helical membrane-spanning segment; that stretch reads LISVAMLGAGAGVGYALLVIV. Residues 23 to 80 form a mediates lipid-binding region; sequence ALLVIVTPGERRKQEMLKEMPLQDPRSREEAARTQQLLLATLQEAATTQENVAWRKNW. The Mitochondrial intermembrane portion of the chain corresponds to 29–93; that stretch reads TPGERRKQEM…GEGGAGGRSP (65 aa).

This sequence belongs to the UQCC3 family. Associates with the ubiquinol-cytochrome c reductase complex (mitochondrial respiratory chain complex III or cytochrome b-c1 complex). Interacts with UQCC1. Forms a complex, named COMC, composed of UQCC1, UQCC2; UQCC3 and UQCC4; mediates MT-CYB hemylation and association with the first nuclear-encoded complex III subunit UQCRQ. Probably cleaved by OMA1 under mitochondrial stress conditions.

It is found in the mitochondrion inner membrane. In terms of biological role, required for the assembly of the ubiquinol-cytochrome c reductase complex (mitochondrial respiratory chain complex III or cytochrome b-c1 complex), mediating cytochrome b recruitment and probably stabilization within the complex. Thereby, plays an important role in ATP production by mitochondria. Cardiolipin-binding protein, it may also control the cardiolipin composition of mitochondria membranes and their morphology. The polypeptide is Ubiquinol-cytochrome-c reductase complex assembly factor 3 (Homo sapiens (Human)).